Reading from the N-terminus, the 198-residue chain is 7-methyl-GTP pyrophosphatase (198 aa).

The active-site Proton acceptor is the aspartate 75.

The protein belongs to the Maf family. YceF subfamily. The cofactor is a divalent metal cation.

It is found in the cytoplasm. The enzyme catalyses N(7)-methyl-GTP + H2O = N(7)-methyl-GMP + diphosphate + H(+). Functionally, nucleoside triphosphate pyrophosphatase that hydrolyzes 7-methyl-GTP (m(7)GTP). May have a dual role in cell division arrest and in preventing the incorporation of modified nucleotides into cellular nucleic acids. This Nitrosospira multiformis (strain ATCC 25196 / NCIMB 11849 / C 71) protein is 7-methyl-GTP pyrophosphatase.